Consider the following 293-residue polypeptide: Glycine--tRNA ligase alpha subunit (293 aa).

Belongs to the class-II aminoacyl-tRNA synthetase family. As to quaternary structure, tetramer of two alpha and two beta subunits.

It localises to the cytoplasm. The enzyme catalyses tRNA(Gly) + glycine + ATP = glycyl-tRNA(Gly) + AMP + diphosphate. The protein is Glycine--tRNA ligase alpha subunit of Prochlorococcus marinus (strain MIT 9211).